The sequence spans 382 residues: Alkanesulfonate monooxygenase (382 aa).

The protein belongs to the SsuD family. As to quaternary structure, homotetramer.

The catalysed reaction is an alkanesulfonate + FMNH2 + O2 = an aldehyde + FMN + sulfite + H2O + 2 H(+). Its function is as follows. Catalyzes the desulfonation of aliphatic sulfonates. In Yersinia pseudotuberculosis serotype O:1b (strain IP 31758), this protein is Alkanesulfonate monooxygenase.